The following is a 291-amino-acid chain: Endo-1,4-beta-xylanase 11B (291 aa).

The N-terminal stretch at 1 to 19 is a signal peptide; that stretch reads MVAFSSLFLGASIAATALA. In terms of domain architecture, GH11 spans 34–222; it reads TYTQSATGTH…SSGSARINVG (189 aa). N-linked (GlcNAc...) asparagine glycosylation occurs at Asn-93. The Nucleophile role is filled by Glu-118. The active-site Proton donor is the Glu-209. Residues 223–246 form a disordered region; that stretch reads GGSTGGGNNGGGNNGGNPGGNPGG. The 37-residue stretch at 255–291 folds into the CBM1 domain; it reads NCSPRWGQCGGQGWNGPTCCESGTTCRQQNQWYSQCL.

It belongs to the glycosyl hydrolase 11 (cellulase G) family.

Its subcellular location is the secreted. The enzyme catalyses Endohydrolysis of (1-&gt;4)-beta-D-xylosidic linkages in xylans.. It participates in glycan degradation; xylan degradation. The activity iss completely inhibited by Hg(2+), a metal ion that interacts with Trp and oxidizes the indole ring, and is significantly enhanced by beta-mercaptoethanol, which counteracts the oxidation effects of the S-S linkage between Cys residues. Functionally, endo-1,4-beta-xylanase involved in the hydrolysis of xylan, a major structural heterogeneous polysaccharide found in plant biomass representing the second most abundant polysaccharide in the biosphere, after cellulose. Shows maximum activity on soluble wheat arabinoxylan (defined as 100%), moderate activity on birchwood xylan (80.5%) and beechwood xylan (76.2%), and weak activity on insoluble wheat arabinoxylan (7.0%). Has no activity towards glucan or carboxymethyl cellulose-sodium (CMC-Na). The protein is Endo-1,4-beta-xylanase 11B of Humicola insolens (Soft-rot fungus).